A 634-amino-acid chain; its full sequence is Factor of DNA methylation 1 (634 aa).

The stretch at 288 to 469 (LDEKKNLHQA…LESMNSVLMT (182 aa)) forms a coiled coil. A compositionally biased stretch (basic and acidic residues) spans 349 to 364 (ELDRQKLDEDKRKSDA). Positions 349–375 (ELDRQKLDEDKRKSDAMNKSLQLASRE) are disordered.

As to quaternary structure, homodimer. Interacts with IDN2 and AGO4. Forms a complex with IDN2 and FMD2/INDL2. Highly expressed in flowers and at lower levels in roots, leaves and stems.

Functionally, forms a complex with IDN2 and FDM2/IDNL2 that is required for RNA-directed DNA methylation (RdDM) and that functions at a downstream step of the RdDM pathway. Required for de novo DNA methylation and 24 nucleotide small interfering RNA (siRNA) accumulation. Binds unmethylated but not methylated DNAs through its coiled-coil domain. May bind double-stranded RNAs (dsRNAs) with 5'-overhangs through its XS domain. However, according to, FMD1 does not bind dsRNAs. The chain is Factor of DNA methylation 1 from Arabidopsis thaliana (Mouse-ear cress).